A 272-amino-acid chain; its full sequence is Adenylate kinase (272 aa).

55-60 (GAGKGT) contacts ATP. Residues 75-104 (ATGDMLRSQVAKKTPLGKEAKKIMDQGGLV) are NMP. AMP-binding positions include T76, R81, 102–104 (GLV), 131–134 (GFPR), and Q138. Residues 172–209 (GRLVHPASGRSYHKIFNPPKQDMKDDITGEPLIQRSDD) form an LID region. Residues R173 and 182-183 (SY) contribute to the ATP site. AMP-binding residues include R206 and R217. Residue Q245 coordinates ATP.

It belongs to the adenylate kinase family. AK2 subfamily. In terms of assembly, monomer.

It is found in the cytoplasm. Its subcellular location is the cytosol. The protein localises to the mitochondrion intermembrane space. The catalysed reaction is AMP + ATP = 2 ADP. Catalyzes the reversible transfer of the terminal phosphate group between ATP and AMP. Plays an important role in cellular energy homeostasis and in adenine nucleotide metabolism. Adenylate kinase activity is critical for regulation of the phosphate utilization and the AMP de novo biosynthesis pathways. This Talaromyces marneffei (Penicillium marneffei) protein is Adenylate kinase (adk1).